A 128-amino-acid polypeptide reads, in one-letter code: Ribonuclease P protein component (128 aa).

The protein belongs to the RnpA family. In terms of assembly, consists of a catalytic RNA component (M1 or rnpB) and a protein subunit.

The catalysed reaction is Endonucleolytic cleavage of RNA, removing 5'-extranucleotides from tRNA precursor.. Functionally, RNaseP catalyzes the removal of the 5'-leader sequence from pre-tRNA to produce the mature 5'-terminus. It can also cleave other RNA substrates such as 4.5S RNA. The protein component plays an auxiliary but essential role in vivo by binding to the 5'-leader sequence and broadening the substrate specificity of the ribozyme. In Rhizobium meliloti (strain 1021) (Ensifer meliloti), this protein is Ribonuclease P protein component.